A 105-amino-acid chain; its full sequence is uncharacterized protein (105 aa).

This is an uncharacterized protein from Orgyia pseudotsugata multicapsid polyhedrosis virus (OpMNPV).